Reading from the N-terminus, the 845-residue chain is Proto-oncogene vav (845 aa).

One can recognise a Calponin-homology (CH) domain in the interval 1-119; it reads MELWRQCTHW…YTLSALSWTP (119 aa). Residues 194 to 373 form the DH domain; the sequence is KRCCCLREIQ…RDLAQCVNEV (180 aa). Residues 402–504 form the PH domain; sequence RPKIDGELKI…WMEQFEMAIS (103 aa). The segment at 515–564 adopts a Phorbol-ester/DAG-type zinc-finger fold; sequence GHDFQMFSFEETTSCKACQMLLRGTFYQGYRCYRCRAPAHKECLGRVPPC. In terms of domain architecture, SH3 1 spans 592–660; the sequence is LGLPKMEVFQ…PCNRVHPYVH (69 aa). The region spanning 671–765 is the SH2 domain; that stretch reads WYAGPMERAG…SLDTTLQFPY (95 aa). In terms of domain architecture, SH3 2 spans 782-842; that stretch reads KYFGTAKARY…PSNYVEEDYS (61 aa). A phosphotyrosine mark is found at Tyr826 and Tyr844.

Interacts with SHB. Interacts with APS, DOCK2, GRB2, GRB3, DOCK2, SLA, TEC and ZNF655/VIK. Interacts with SIAH2; without leading to its degradation. Associates with BLNK, PLCG1, GRB2 and NCK1 in a B-cell antigen receptor-dependent fashion. Interacts with CBLB; which inhibits tyrosine phosphorylation and down-regulates activity. May interact with CCPG1. Interacts with CLNK. Interacts with THEMIS2. Interacts with NEK3 and this interaction is prolactin-dependent. Interacts with ITK. Interacts with PTK2B/PYK2. Interacts with HCK. Interacts with PTK2B/PYK2. Interacts (via SH2 domain) with SYK. Interacts with ANKRD54. Interacts with CD6. Interacts with isoform 2 of CRACR2A. Interacts with LCP2; this interaction plays a role in TCR-mediated cytokine production. In terms of processing, phosphorylated by FYN. Phosphorylated on tyrosine residues by HCK in response to IFNG and bacterial lipopolysaccharide (LPS). In terms of tissue distribution, widely expressed in hematopoietic cells but not in other cell types. Found in the spleen and lung.

Its function is as follows. Couples tyrosine kinase signals with the activation of the Rho/Rac GTPases, thus leading to cell differentiation and/or proliferation. The polypeptide is Proto-oncogene vav (Vav1) (Mus musculus (Mouse)).